We begin with the raw amino-acid sequence, 225 residues long: Ribosome maturation factor RimM (225 aa).

Residues 144–225 (ADEFYWVDLI…RIVVDWEADY (82 aa)) enclose the PRC barrel domain.

The protein belongs to the RimM family. Binds ribosomal protein uS19.

The protein resides in the cytoplasm. Functionally, an accessory protein needed during the final step in the assembly of 30S ribosomal subunit, possibly for assembly of the head region. Essential for efficient processing of 16S rRNA. May be needed both before and after RbfA during the maturation of 16S rRNA. It has affinity for free ribosomal 30S subunits but not for 70S ribosomes. In Burkholderia orbicola (strain MC0-3), this protein is Ribosome maturation factor RimM.